Consider the following 418-residue polypeptide: EPS I polysaccharide export inner membrane protein EpsF (418 aa).

10 consecutive transmembrane segments (helical) span residues 21-41, 45-65, 142-162, 170-190, 222-242, 262-282, 296-316, 326-346, 347-367, and 377-397; these read VLVV…FPIA, CAAI…LATA, PLMV…IAIY, YVVF…GSAI, AGTH…MLFL, LLVL…EFVM, SAWE…AWLF, LTYF…PAVG, ARLF…FFFA, and KTLA…IVDV.

To S.marcescens SfuB.

The protein resides in the cell inner membrane. Its function is as follows. Probably involved in polymerization and/or export of exopolysaccharide EPS I which functions as a virulence factor. May play a role in export of EPS I or its intermediates across the membranes. This chain is EPS I polysaccharide export inner membrane protein EpsF (epsF), found in Ralstonia solanacearum (Pseudomonas solanacearum).